The following is a 254-amino-acid chain: Alcohol dehydrogenase 2 (254 aa).

10–33 (FVAGLGGIGFDTSREIVKSGPKNL) contributes to the NAD(+) binding site. Residue S138 participates in substrate binding. Residue Y151 is the Proton acceptor of the active site.

Belongs to the short-chain dehydrogenases/reductases (SDR) family. In terms of assembly, homodimer.

It carries out the reaction a primary alcohol + NAD(+) = an aldehyde + NADH + H(+). It catalyses the reaction a secondary alcohol + NAD(+) = a ketone + NADH + H(+). The polypeptide is Alcohol dehydrogenase 2 (Adh2) (Drosophila buzzatii (Fruit fly)).